Reading from the N-terminus, the 366-residue chain is tRNA/tmRNA (uracil-C(5))-methyltransferase (366 aa).

Residues Gln189, Tyr217, Asn222, Glu238, and Asp298 each coordinate S-adenosyl-L-methionine. Catalysis depends on Cys323, which acts as the Nucleophile. Glu357 acts as the Proton acceptor in catalysis.

The protein belongs to the class I-like SAM-binding methyltransferase superfamily. RNA M5U methyltransferase family. TrmA subfamily.

The enzyme catalyses uridine(54) in tRNA + S-adenosyl-L-methionine = 5-methyluridine(54) in tRNA + S-adenosyl-L-homocysteine + H(+). It catalyses the reaction uridine(341) in tmRNA + S-adenosyl-L-methionine = 5-methyluridine(341) in tmRNA + S-adenosyl-L-homocysteine + H(+). In terms of biological role, dual-specificity methyltransferase that catalyzes the formation of 5-methyluridine at position 54 (m5U54) in all tRNAs, and that of position 341 (m5U341) in tmRNA (transfer-mRNA). In Shewanella oneidensis (strain ATCC 700550 / JCM 31522 / CIP 106686 / LMG 19005 / NCIMB 14063 / MR-1), this protein is tRNA/tmRNA (uracil-C(5))-methyltransferase.